A 780-amino-acid chain; its full sequence is MASAELQGKYQKLAQEYSKLRAQNQVLKKGVVDEQANSAALKEQLKMKDQSLRKLQQEMDSLTFRNLQLAKRVELLQDELALSEPRGKKNKKSGESSSQLSQEQKSVFDEDLQKKIEENERLHIQFFEADEQHKHVEAELRSRLATLETEAAQHQAVVDGLTRKYMETIEKLQNDKAKLEVKSQTLEKEAKECRLRTEECQLQLKTLHEDLSGRLEESLSIINEKVPFNDTKYSQYNALNVPLHNRRHQLKMRDIAGQALAFVQDLVTALLNFHTYTEQRIQIFPVDSAIDTISPLNQKFSQYLHENASYVRPLEEGMLHLFESITEDTVTVLETTVKLKTFSEHLTSYICFLRKILPYQLKSLEEECESSLCTSALRARNLELSQDMKKMTAVFEKLQTYIALLALPSTEPDGLLRTNYSSVLTNVGAALHGFHDVMKDISKHYSQKAAIEHELPTATQKLITTNDCILSSVVALTNGAGKIASFFSNNLDYFIASLSYGPKAASGFISPLSAECMLQYKKKAAAYMKSLRKPLLESVPYEEALANRRILLSSTESREGLAQQVQQSLEKISKLEQEKEHWMLEAQLAKIKLEKENQRIADKLKNTGSAQLVGLAQENAAVSNTAGQDEATAKAVLEPIQSTSLIGTLTRTSDSEVPDVESREDLIKNHYMARIVELTSQLQLADSKSVHFYAECRALSKRLALAEKSKEALTEEMKLASQNISRLQDELTTTKRSYEDQLSMMSDHLCSMNETLSKQREEIDTLKMSSKGNSKKNKSR.

Coiled-coil stretches lie at residues M1–L207 and E556–T607. The segment at E84–Q104 is disordered. Residues E95–Q104 show a composition bias toward low complexity. Phosphothreonine is present on T652. The stretch at Y693 to L742 forms a coiled coil. A disordered region spans residues R760–R780.

In terms of assembly, component of the FERRY complex, composed of five subunits: TBCK, PPP1R21, FERRY3, CRYZL1 and GATAD1, with a ratio of 1:2:1:2:4 respectively. PPP1R21 serves as a binding hub connecting all five complex subunits to mediate the binding to specific mitochondrial mRNAs. Interacts with the GTP-bound form of RAB5A (via its C-terminal region); linking the mRNP complex onto trafficking endosomes for active mRNA transport. Interacts with PPP1CA.

It is found in the early endosome. In terms of biological role, component of the FERRY complex (Five-subunit Endosomal Rab5 and RNA/ribosome intermediary). The FERRY complex directly interacts with mRNAs and RAB5A, and functions as a RAB5A effector involved in the localization and the distribution of specific mRNAs most likely by mediating their endosomal transport. The complex recruits mRNAs and ribosomes to early endosomes through direct mRNA-interaction. In the complex, PPP1R21 serves as a binding hub connecting all five complex subunits and mediating the binding to mRNA and early endosomes via RAB5A. Putative regulator of protein phosphatase 1 (PP1) activity. May play a role in the endosomal sorting process or in endosome maturation pathway. This chain is Protein phosphatase 1 regulatory subunit 21 (PPP1R21), found in Homo sapiens (Human).